Consider the following 528-residue polypeptide: Coiled-coil domain-containing protein 116 (528 aa).

The disordered stretch occupies residues 43 to 68; the sequence is GHVPHPPSTCGSSALQNQRRNKRHPQ. A compositionally biased stretch (polar residues) spans 51-60; that stretch reads TCGSSALQNQ. The stretch at 81–104 forms a coiled coil; sequence HVLDSLETVVEKATERMAAMKTEA. 2 disordered regions span residues 335–444 and 497–528; these read PLFP…RQRA and SSSP…THHS. The segment covering 363–378 has biased composition (polar residues); the sequence is PTNSGQPHPTVSSPKT. A Phosphoserine modification is found at S389. Residues 419–429 show a composition bias toward basic and acidic residues; it reads HSREKEPDSDP. Residues 434 to 443 are compositionally biased toward polar residues; sequence PPVSLSSRQR. Low complexity predominate over residues 497 to 510; that stretch reads SSSPSSLCPEVTSS.

Its subcellular location is the cytoplasm. It is found in the cytoskeleton. It localises to the microtubule organizing center. The protein resides in the centrosome. This Macaca fascicularis (Crab-eating macaque) protein is Coiled-coil domain-containing protein 116 (CCDC116).